The following is a 246-amino-acid chain: Probable phosphatase ASA_1316 (246 aa).

The Zn(2+) site is built by H8, H10, H16, H41, E74, H102, H132, D193, and H195.

The protein belongs to the PHP family. Zn(2+) is required as a cofactor.

The sequence is that of Probable phosphatase ASA_1316 from Aeromonas salmonicida (strain A449).